The sequence spans 294 residues: GTPase Era (294 aa).

One can recognise an Era-type G domain in the interval 3–170 (KSGFISIIGR…LELMIKYMPE (168 aa)). The interval 11-18 (GRPNVGKS) is G1. 11–18 (GRPNVGKS) serves as a coordination point for GTP. The tract at residues 37–41 (QTTRN) is G2. Residues 58–61 (DTPG) form a G3 region. GTP is bound by residues 58 to 62 (DTPGI) and 120 to 123 (NKID). The G4 stretch occupies residues 120–123 (NKID). The segment at 149–151 (ISA) is G5. In terms of domain architecture, KH type-2 spans 201-278 (LSEEVPHGIA…NLKVWVKVKK (78 aa)).

Belongs to the TRAFAC class TrmE-Era-EngA-EngB-Septin-like GTPase superfamily. Era GTPase family. Monomer.

The protein localises to the cytoplasm. It localises to the cell membrane. In terms of biological role, an essential GTPase that binds both GDP and GTP, with rapid nucleotide exchange. Plays a role in 16S rRNA processing and 30S ribosomal subunit biogenesis and possibly also in cell cycle regulation and energy metabolism. In Clostridium novyi (strain NT), this protein is GTPase Era.